The sequence spans 611 residues: Probable inactive purple acid phosphatase 27 (611 aa).

A signal peptide spans Met-1 to Ser-18. 2 N-linked (GlcNAc...) asparagine glycosylation sites follow: Asn-263 and Asn-271. Residue Asp-293 participates in Fe cation binding. Asn-314 carries N-linked (GlcNAc...) asparagine glycosylation. 2 residues coordinate Fe cation: Asp-334 and Tyr-337. A Zn(2+)-binding site is contributed by Asp-334. Residues Asn-367, His-456, and His-498 each contribute to the Zn(2+) site. Position 367 (Asn-367) interacts with substrate. Position 498–500 (His-498–His-500) interacts with substrate. Fe cation is bound at residue His-500.

The protein belongs to the metallophosphoesterase superfamily. Purple acid phosphatase family. In terms of assembly, homodimer. The cofactor is Fe cation. Zn(2+) is required as a cofactor. Expressed in roots, stems, leaves, flowers and siliques.

The protein localises to the secreted. This is Probable inactive purple acid phosphatase 27 (PAP27) from Arabidopsis thaliana (Mouse-ear cress).